Here is a 216-residue protein sequence, read N- to C-terminus: Pyridoxine/pyridoxamine 5'-phosphate oxidase (216 aa).

Substrate is bound by residues 12–15 (RREY) and Lys-70. FMN contacts are provided by residues 65–70 (RLVLLK), 80–81 (YT), Arg-86, Lys-87, and Gln-109. Substrate-binding residues include Tyr-127, Arg-131, and Ser-135. FMN contacts are provided by residues 144–145 (QS) and Trp-189. 195–197 (RMH) contacts substrate. Arg-199 provides a ligand contact to FMN.

The protein belongs to the pyridoxamine 5'-phosphate oxidase family. Homodimer. It depends on FMN as a cofactor.

The enzyme catalyses pyridoxamine 5'-phosphate + O2 + H2O = pyridoxal 5'-phosphate + H2O2 + NH4(+). It catalyses the reaction pyridoxine 5'-phosphate + O2 = pyridoxal 5'-phosphate + H2O2. It functions in the pathway cofactor metabolism; pyridoxal 5'-phosphate salvage; pyridoxal 5'-phosphate from pyridoxamine 5'-phosphate: step 1/1. The protein operates within cofactor metabolism; pyridoxal 5'-phosphate salvage; pyridoxal 5'-phosphate from pyridoxine 5'-phosphate: step 1/1. Functionally, catalyzes the oxidation of either pyridoxine 5'-phosphate (PNP) or pyridoxamine 5'-phosphate (PMP) into pyridoxal 5'-phosphate (PLP). The polypeptide is Pyridoxine/pyridoxamine 5'-phosphate oxidase (Sodalis glossinidius (strain morsitans)).